The primary structure comprises 258 residues: Mediator of RNA polymerase II transcription subunit 18 (258 aa).

This sequence belongs to the Mediator complex subunit 18 family. As to quaternary structure, component of the Mediator complex.

It localises to the nucleus. Its function is as follows. Component of the Mediator complex, a coactivator involved in the regulated transcription of nearly all RNA polymerase II-dependent genes. Mediator functions as a bridge to convey information from gene-specific regulatory proteins to the basal RNA polymerase II transcription machinery. Mediator is recruited to promoters by direct interactions with regulatory proteins and serves as a scaffold for the assembly of a functional preinitiation complex with RNA polymerase II and the general transcription factors. The polypeptide is Mediator of RNA polymerase II transcription subunit 18 (SRB5) (Eremothecium gossypii (strain ATCC 10895 / CBS 109.51 / FGSC 9923 / NRRL Y-1056) (Yeast)).